A 576-amino-acid chain; its full sequence is RING finger and SPRY domain-containing protein 1 (576 aa).

An N-terminal signal peptide occupies residues 1–16 (MIVFGWAVFLASRSLG). Ser50 bears the Phosphoserine mark. The tract at residues 50–99 (SGTDDSVDTQQQQAENSAVPTADTRSQPRDPVRPPRRGRGPHEPRRKKQN) is disordered. Positions 57 to 68 (DTQQQQAENSAV) are enriched in polar residues. The segment covering 83–97 (PPRRGRGPHEPRRKK) has biased composition (basic residues). Residues 300 to 483 (LFLKEGRQLT…CEFNFGAKPF (184 aa)) form the B30.2/SPRY domain. The N-linked (GlcNAc...) asparagine glycan is linked to Asn314. The RING-type zinc-finger motif lies at 527–562 (CSLCCDEVADTQLKPCGHSDLCMDCALQLETCPLCR).

The protein resides in the secreted. The protein is RING finger and SPRY domain-containing protein 1 (RSPRY1) of Pongo abelii (Sumatran orangutan).